A 255-amino-acid chain; its full sequence is tRNA uridine(34) hydroxylase (255 aa).

A Rhodanese domain is found at 125 to 219; the sequence is ATPDTILLDV…YLEQIPESES (95 aa). Residue Cys-179 is the Cysteine persulfide intermediate of the active site.

The protein belongs to the TrhO family.

The catalysed reaction is uridine(34) in tRNA + AH2 + O2 = 5-hydroxyuridine(34) in tRNA + A + H2O. Functionally, catalyzes oxygen-dependent 5-hydroxyuridine (ho5U) modification at position 34 in tRNAs. The protein is tRNA uridine(34) hydroxylase of Nitrobacter winogradskyi (strain ATCC 25391 / DSM 10237 / CIP 104748 / NCIMB 11846 / Nb-255).